A 365-amino-acid chain; its full sequence is 3-dehydroquinate synthase (365 aa).

Residues 69–74 (DGEAHK), 103–107 (GVIGD), 127–128 (TT), K140, and K149 contribute to the NAD(+) site. Zn(2+) is bound by residues E182, H245, and H262.

The protein belongs to the sugar phosphate cyclases superfamily. Dehydroquinate synthase family. NAD(+) serves as cofactor. The cofactor is Co(2+). Zn(2+) is required as a cofactor.

It is found in the cytoplasm. It carries out the reaction 7-phospho-2-dehydro-3-deoxy-D-arabino-heptonate = 3-dehydroquinate + phosphate. Its pathway is metabolic intermediate biosynthesis; chorismate biosynthesis; chorismate from D-erythrose 4-phosphate and phosphoenolpyruvate: step 2/7. Its function is as follows. Catalyzes the conversion of 3-deoxy-D-arabino-heptulosonate 7-phosphate (DAHP) to dehydroquinate (DHQ). The chain is 3-dehydroquinate synthase from Pseudomonas putida (strain ATCC 47054 / DSM 6125 / CFBP 8728 / NCIMB 11950 / KT2440).